Reading from the N-terminus, the 226-residue chain is Uracil-DNA glycosylase (226 aa).

The Proton acceptor role is filled by D64.

This sequence belongs to the uracil-DNA glycosylase (UDG) superfamily. UNG family.

It is found in the cytoplasm. The catalysed reaction is Hydrolyzes single-stranded DNA or mismatched double-stranded DNA and polynucleotides, releasing free uracil.. In terms of biological role, excises uracil residues from the DNA which can arise as a result of misincorporation of dUMP residues by DNA polymerase or due to deamination of cytosine. The protein is Uracil-DNA glycosylase of Vibrio parahaemolyticus serotype O3:K6 (strain RIMD 2210633).